The primary structure comprises 151 residues: UPF0756 membrane protein GWCH70_2680 (151 aa).

4 helical membrane passes run Ile5 to Ile25, Trp53 to Phe73, Trp86 to Leu106, and Leu116 to Ile136.

This sequence belongs to the UPF0756 family.

The protein resides in the cell membrane. In Geobacillus sp. (strain WCH70), this protein is UPF0756 membrane protein GWCH70_2680.